A 332-amino-acid polypeptide reads, in one-letter code: Small ribosomal subunit protein uS2 (332 aa).

It belongs to the universal ribosomal protein uS2 family.

The sequence is that of Small ribosomal subunit protein uS2 from Nitrobacter hamburgensis (strain DSM 10229 / NCIMB 13809 / X14).